Here is a 251-residue protein sequence, read N- to C-terminus: Imidazole glycerol phosphate synthase subunit HisF (251 aa).

Residues D11 and D130 contribute to the active site.

It belongs to the HisA/HisF family. Heterodimer of HisH and HisF.

The protein resides in the cytoplasm. It catalyses the reaction 5-[(5-phospho-1-deoxy-D-ribulos-1-ylimino)methylamino]-1-(5-phospho-beta-D-ribosyl)imidazole-4-carboxamide + L-glutamine = D-erythro-1-(imidazol-4-yl)glycerol 3-phosphate + 5-amino-1-(5-phospho-beta-D-ribosyl)imidazole-4-carboxamide + L-glutamate + H(+). It functions in the pathway amino-acid biosynthesis; L-histidine biosynthesis; L-histidine from 5-phospho-alpha-D-ribose 1-diphosphate: step 5/9. IGPS catalyzes the conversion of PRFAR and glutamine to IGP, AICAR and glutamate. The HisF subunit catalyzes the cyclization activity that produces IGP and AICAR from PRFAR using the ammonia provided by the HisH subunit. This Natranaerobius thermophilus (strain ATCC BAA-1301 / DSM 18059 / JW/NM-WN-LF) protein is Imidazole glycerol phosphate synthase subunit HisF.